Reading from the N-terminus, the 241-residue chain is Carboxy-S-adenosyl-L-methionine synthase (241 aa).

S-adenosyl-L-methionine-binding positions include Tyr-38, 63-65 (GCS), 88-89 (DN), 116-117 (DI), Asn-131, and Arg-198.

Belongs to the class I-like SAM-binding methyltransferase superfamily. Cx-SAM synthase family. As to quaternary structure, homodimer.

The enzyme catalyses prephenate + S-adenosyl-L-methionine = carboxy-S-adenosyl-L-methionine + 3-phenylpyruvate + H2O. Its function is as follows. Catalyzes the conversion of S-adenosyl-L-methionine (SAM) to carboxy-S-adenosyl-L-methionine (Cx-SAM). The chain is Carboxy-S-adenosyl-L-methionine synthase from Haemophilus influenzae (strain PittEE).